Reading from the N-terminus, the 71-residue chain is Guanine nucleotide-binding protein G(I)/G(S)/G(O) subunit gamma-2 (71 aa).

Residue Ala-2 is modified to N-acetylalanine. The residue at position 68 (Cys-68) is a Cysteine methyl ester. A lipid anchor (S-geranylgeranyl cysteine) is attached at Cys-68. Positions 69–71 are cleaved as a propeptide — removed in mature form; sequence AIL.

It belongs to the G protein gamma family. As to quaternary structure, g proteins are composed of 3 units, alpha, beta and gamma. In this context, interacts with GNB2. The heterodimer formed by GNB1 and GNG2 interacts with ARHGEF5. The heterodimer formed by GNB1 and GNG2 interacts with GRK2. Component of the TAS2R14-GNAI1 complex, consisting of TAS2R14, GNAI1, GNB1 and GNG2. Forms complexes with TAS2R14 and G-proteins; these complexes play a role in the perception of bitterness. Component of the TAS2R14-GNAT3 complex, consisting of TAS2R14, GNAT3, GNB1 and GNG2. Component of the TAS2R14-GNAS2 complex, consisting of TAS2R14, GNAS2, GNB1 and GNG2. Adrenal gland and brain.

It localises to the cell membrane. In terms of biological role, guanine nucleotide-binding proteins (G proteins) are involved as a modulator or transducer in various transmembrane signaling systems. The beta and gamma chains are required for the GTPase activity, for replacement of GDP by GTP, and for G protein-effector interaction. This is Guanine nucleotide-binding protein G(I)/G(S)/G(O) subunit gamma-2 (GNG2) from Bos taurus (Bovine).